We begin with the raw amino-acid sequence, 196 residues long: Early light-induced protein, chloroplastic (196 aa).

Residues 1–48 (MAVSSCQSIMSNSMTNISSRSRVNQFTNIPSVYIPTLRRNVSLKVRSM) constitute a chloroplast transit peptide. Positions 47-57 (SMAEGEPKEQS) are enriched in basic and acidic residues. The tract at residues 47 to 81 (SMAEGEPKEQSKVAVDPTTPTASTPTPQPAYTRPP) is disordered. Transmembrane regions (helical) follow at residues 105-125 (LAMI…QGLS), 132-152 (GVAW…IPFF), and 176-196 (IAML…TSLV).

It belongs to the ELIP/psbS family.

It localises to the plastid. It is found in the chloroplast membrane. In terms of biological role, probably involved in the integration of pigments into the mature pigment-protein complexes. The chain is Early light-induced protein, chloroplastic from Pisum sativum (Garden pea).